The following is a 35-amino-acid chain: Antimicrobial peptide 3 (35 aa).

The Chitin-binding type-1 domain maps to 4-35 (GGECGGRFGGCAGGQCCSRFGFCGSGPKYCAH). 3 disulfide bridges follow: C7–C20, C14–C26, and C19–C33.

Contains 3 disulfide bonds. As to expression, expressed in leaf, flower, stem and seed with highest expression in leaf (at protein level).

Has antifungal activity against A.niger (IC(50)=5.4 uM), B.sorokiniana (IC(50)=2.0 uM), B.cinerea (IC(50)=1.6 uM), F.solani (IC(50)=3.7 uM) and A.alternata (IC(50)=5.0 uM). Binds chitin in vitro. Has no antibacterial activity at concentrations up to 10 uM. The sequence is that of Antimicrobial peptide 3 from Stellaria media (Common chickweed).